We begin with the raw amino-acid sequence, 319 residues long: ATP-dependent 6-phosphofructokinase (319 aa).

Residue G11 participates in ATP binding. Position 21 to 25 (21 to 25 (RAVVR)) interacts with ADP. ATP is bound by residues 72 to 73 (RC) and 102 to 105 (GDGS). D103 serves as a coordination point for Mg(2+). Position 125 to 127 (125 to 127 (TID)) interacts with substrate. D127 serves as the catalytic Proton acceptor. R154 lines the ADP pocket. Substrate contacts are provided by residues R162 and 169-171 (MGR). ADP-binding positions include 185-187 (GAE), R211, and 213-215 (KLH). Substrate-binding positions include E222, R243, and 249-252 (HLQR).

The protein belongs to the phosphofructokinase type A (PFKA) family. ATP-dependent PFK group I subfamily. Prokaryotic clade 'B1' sub-subfamily. Homotetramer. Requires Mg(2+) as cofactor.

It localises to the cytoplasm. The enzyme catalyses beta-D-fructose 6-phosphate + ATP = beta-D-fructose 1,6-bisphosphate + ADP + H(+). Its pathway is carbohydrate degradation; glycolysis; D-glyceraldehyde 3-phosphate and glycerone phosphate from D-glucose: step 3/4. With respect to regulation, allosterically activated by ADP and other diphosphonucleosides, and allosterically inhibited by phosphoenolpyruvate. Its function is as follows. Catalyzes the phosphorylation of D-fructose 6-phosphate to fructose 1,6-bisphosphate by ATP, the first committing step of glycolysis. In Clostridium novyi (strain NT), this protein is ATP-dependent 6-phosphofructokinase.